A 288-amino-acid polypeptide reads, in one-letter code: Prohibitin-1, mitochondrial (288 aa).

Topologically, residues 1–10 (MNNVKVPKIP) are mitochondrial matrix. A helical; Signal-anchor for type II membrane protein membrane pass occupies residues 11 to 30 (GGGAISTLLKVGIIGGLGLY). Topologically, residues 31–288 (GATHSLYNVE…GMNLDVDAKN (258 aa)) are mitochondrial intermembrane. Residues 186–219 (KEFTAAIEAKQVAAQEAERAKFIVEKAEQDKRSA) adopt a coiled-coil conformation.

This sequence belongs to the prohibitin family. In terms of assembly, component of a prohibitin multimeric complex in mitochondrial membranes. As to expression, mostly expressed in proliferative tissues, including vasculature, shoot and root apical tissues.

It is found in the mitochondrion inner membrane. Prohibitin probably acts as a holdase/unfoldase for the stabilization of newly synthesized mitochondrial proteins. The protein is Prohibitin-1, mitochondrial (PHB1) of Arabidopsis thaliana (Mouse-ear cress).